A 314-amino-acid polypeptide reads, in one-letter code: Vacuolar membrane protein FOSTERSB_4073 (314 aa).

The segment at 32–60 (KPTSSVVSETSSKSLPSLTSSAFSTSSGA) is disordered. A helical transmembrane segment spans residues 93 to 113 (VYIAVGAVIGAIFISILIWWL). A phosphoserine mark is found at serine 148, serine 254, and serine 274. The interval 240 to 309 (EERKLNLNRP…PSMFLDDVLN (70 aa)) is disordered. A compositionally biased stretch (basic and acidic residues) spans 254–269 (SPERKEKKINSMEGYH).

This sequence belongs to the PRM5 family.

The protein resides in the vacuole membrane. The chain is Vacuolar membrane protein FOSTERSB_4073 from Saccharomyces cerevisiae (strain FostersB) (Baker's yeast).